Consider the following 283-residue polypeptide: Formamidopyrimidine-DNA glycosylase (283 aa).

The Schiff-base intermediate with DNA role is filled by P2. Catalysis depends on E3, which acts as the Proton donor. Residue K61 is the Proton donor; for beta-elimination activity of the active site. DNA is bound by residues H94, R113, and K159. An FPG-type zinc finger spans residues 245–279; sequence DAYGREGESCRRCGAVMRREKFMNRSSFYCPKCQP. The active-site Proton donor; for delta-elimination activity is R269.

It belongs to the FPG family. Monomer. Requires Zn(2+) as cofactor.

The catalysed reaction is Hydrolysis of DNA containing ring-opened 7-methylguanine residues, releasing 2,6-diamino-4-hydroxy-5-(N-methyl)formamidopyrimidine.. The enzyme catalyses 2'-deoxyribonucleotide-(2'-deoxyribose 5'-phosphate)-2'-deoxyribonucleotide-DNA = a 3'-end 2'-deoxyribonucleotide-(2,3-dehydro-2,3-deoxyribose 5'-phosphate)-DNA + a 5'-end 5'-phospho-2'-deoxyribonucleoside-DNA + H(+). Functionally, involved in base excision repair of DNA damaged by oxidation or by mutagenic agents. Acts as a DNA glycosylase that recognizes and removes damaged bases. Has a preference for oxidized purines, such as 7,8-dihydro-8-oxoguanine (8-oxoG). Has AP (apurinic/apyrimidinic) lyase activity and introduces nicks in the DNA strand. Cleaves the DNA backbone by beta-delta elimination to generate a single-strand break at the site of the removed base with both 3'- and 5'-phosphates. The polypeptide is Formamidopyrimidine-DNA glycosylase (Mycolicibacterium paratuberculosis (strain ATCC BAA-968 / K-10) (Mycobacterium paratuberculosis)).